We begin with the raw amino-acid sequence, 319 residues long: Red chlorophyll catabolite reductase, chloroplastic (319 aa).

The N-terminal 39 residues, 1 to 39 (MAMIFCNTLYSSSSPSYLSPLTSKPSRFSKNLRPRAQFQ), are a transit peptide targeting the chloroplast. Residues Glu154 and 207–209 (YVS) each bind red chlorophyll catabolite. A coiled-coil region spans residues 255 to 286 (LERCVKEEEEKIVVGEEERMELERRDKSFRRK). Residue Asp291 participates in red chlorophyll catabolite binding.

As to quaternary structure, homodimer. Interacts with HCAR. Interacts with SGR1, NYC1, NOL, PPH, PAO and the LHCII complex. Part of a SGR1-CCE-LHCII complex, which acts in chlorophyll breakdown. As to expression, expressed in all tissues tested, including roots.

The protein localises to the plastid. The protein resides in the chloroplast stroma. It is found in the chloroplast thylakoid membrane. The enzyme catalyses primary fluorescent chlorophyll catabolite + 2 oxidized [2Fe-2S]-[ferredoxin] = red chlorophyll catabolite + 2 reduced [2Fe-2S]-[ferredoxin] + 3 H(+). It functions in the pathway porphyrin-containing compound metabolism; chlorophyll degradation. Its function is as follows. Catalyzes the key reaction of chlorophyll catabolism, porphyrin macrocycle cleavage of pheophorbide a (pheide a) to a primary fluorescent catabolite (pFCC). Works in a two-step reaction with pheophorbide a oxygenase (PaO) by reducing the C20/C1 double bond of the intermediate, RCC. Belongs to the chlorophyll catabolic enzymes (CCEs). The protein is Red chlorophyll catabolite reductase, chloroplastic of Arabidopsis thaliana (Mouse-ear cress).